The chain runs to 139 residues: D-ribose pyranase (139 aa).

Residue His-20 is the Proton donor of the active site. Residues Asp-28, His-106, and Tyr-128–Asn-130 each bind substrate.

Belongs to the RbsD / FucU family. RbsD subfamily. In terms of assembly, homodecamer.

The protein resides in the cytoplasm. It carries out the reaction beta-D-ribopyranose = beta-D-ribofuranose. The protein operates within carbohydrate metabolism; D-ribose degradation; D-ribose 5-phosphate from beta-D-ribopyranose: step 1/2. Its function is as follows. Catalyzes the interconversion of beta-pyran and beta-furan forms of D-ribose. In Aliivibrio fischeri (strain MJ11) (Vibrio fischeri), this protein is D-ribose pyranase.